A 508-amino-acid chain; its full sequence is Aromatic-L-amino-acid decarboxylase (508 aa).

Thr-82 is a binding site for substrate. Residues Ala-148 and Ser-149 each coordinate pyridoxal 5'-phosphate. His-192 lines the substrate pocket. Positions 246 and 300 each coordinate pyridoxal 5'-phosphate. Lys-303 is subject to N6-(pyridoxal phosphate)lysine.

Belongs to the group II decarboxylase family. In terms of assembly, homodimer. Pyridoxal 5'-phosphate serves as cofactor.

The enzyme catalyses L-dopa + H(+) = dopamine + CO2. It carries out the reaction 5-hydroxy-L-tryptophan + H(+) = serotonin + CO2. Functionally, catalyzes the decarboxylation of L-3,4-dihydroxyphenylalanine (DOPA) to dopamine, L-5-hydroxytryptophan to serotonin and L-tryptophan to tryptamine. The protein is Aromatic-L-amino-acid decarboxylase (Ddc) of Manduca sexta (Tobacco hawkmoth).